A 100-amino-acid polypeptide reads, in one-letter code: Urease subunit gamma (100 aa).

The protein belongs to the urease gamma subunit family. In terms of assembly, heterotrimer of UreA (gamma), UreB (beta) and UreC (alpha) subunits. Three heterotrimers associate to form the active enzyme.

It localises to the cytoplasm. It carries out the reaction urea + 2 H2O + H(+) = hydrogencarbonate + 2 NH4(+). Its pathway is nitrogen metabolism; urea degradation; CO(2) and NH(3) from urea (urease route): step 1/1. This Methylocella silvestris (strain DSM 15510 / CIP 108128 / LMG 27833 / NCIMB 13906 / BL2) protein is Urease subunit gamma.